The following is a 411-amino-acid chain: Exodeoxyribonuclease 7 large subunit (411 aa).

This sequence belongs to the XseA family. Heterooligomer composed of large and small subunits.

The protein resides in the cytoplasm. It catalyses the reaction Exonucleolytic cleavage in either 5'- to 3'- or 3'- to 5'-direction to yield nucleoside 5'-phosphates.. In terms of biological role, bidirectionally degrades single-stranded DNA into large acid-insoluble oligonucleotides, which are then degraded further into small acid-soluble oligonucleotides. The chain is Exodeoxyribonuclease 7 large subunit from Mycobacterium sp. (strain KMS).